A 528-amino-acid polypeptide reads, in one-letter code: Catalase (528 aa).

Over residues 1 to 22 (MADRREKSADQMKLWKESRANQ) the composition is skewed to basic and acidic residues. Positions 1-32 (MADRREKSADQMKLWKESRANQKPDVLTTGGG) are disordered. Active-site residues include H75 and N148. H194, S201, R203, N213, K237, W303, H305, and K306 together coordinate NADP(+). Y358 is a binding site for heme. The short motif at 525–528 (KANL) is the Microbody targeting signal; atypical element.

It belongs to the catalase family. Homotetramer. Requires heme as cofactor. It depends on NADP(+) as a cofactor.

The protein resides in the peroxisome matrix. The catalysed reaction is 2 H2O2 = O2 + 2 H2O. Catalyzes the degradation of hydrogen peroxide (H(2)O(2)) generated by peroxisomal oxidases to water and oxygen, thereby protecting cells from the toxic effects of hydrogen peroxide. This chain is Catalase (cat), found in Glandirana rugosa (Japanese wrinkled frog).